The following is a 307-amino-acid chain: Transcription factor bHLH127 (307 aa).

2 disordered regions span residues 41–68 (SDPL…LPHQ) and 101–155 (PHPQ…AEMH). Residues 110-119 (APPPPKPPSS) are compositionally biased toward pro residues. A bHLH domain is found at 150–199 (RAAEMHNLAERRRREKINERMKTLQQLIPRCNKSTKVSMLEDVIEYVKSL).

This sequence belongs to the bHLH protein family. In terms of assembly, homodimer.

It is found in the nucleus. This chain is Transcription factor bHLH127 (BHLH127), found in Arabidopsis thaliana (Mouse-ear cress).